Consider the following 685-residue polypeptide: Sulfite reductase [ferredoxin], chloroplastic (685 aa).

Residues 1 to 51 (MTTSFAAAALRDPKLQIPNYHGLRSSSAASSLSRNALSVPSSTRSSSLIRA) constitute a chloroplast transit peptide. 4 residues coordinate [4Fe-4S] cluster: Cys495, Cys501, Cys541, and Cys545. Cys545 serves as a coordination point for siroheme.

Belongs to the nitrite and sulfite reductase 4Fe-4S domain family. As to quaternary structure, monomer. Interacts with ferredoxin. Requires siroheme as cofactor. It depends on [4Fe-4S] cluster as a cofactor. In terms of processing, phosphorylated; this phosphorylation reduces DNA-binding. As to expression, expressed in leaves, stems, and roots.

Its subcellular location is the plastid. The protein resides in the chloroplast stroma. It localises to the chloroplast nucleoid. It is found in the plastid stroma. It catalyses the reaction hydrogen sulfide + 6 oxidized [2Fe-2S]-[ferredoxin] + 3 H2O = sulfite + 6 reduced [2Fe-2S]-[ferredoxin] + 7 H(+). Functionally, essential protein with sulfite reductase activity required in assimilatory sulfate reduction pathway during both primary and secondary metabolism and thus involved in development and growth. Its function is as follows. DNA-binding protein that binds to both double-stranded and single-stranded DNA without significant sequence specificity to reversibly repress the transcriptional activity of chloroplast nucleoids by promoting DNA compaction and possibly regulate DNA replication. The polypeptide is Sulfite reductase [ferredoxin], chloroplastic (SIR) (Pisum sativum (Garden pea)).